The chain runs to 208 residues: MSYKLTYFSIRGLAEPIRLFLVDQDIKFIDDRIAKDDFSSIKSQFQFGQLPCLYDGDQQIVQSGAILRHLARKYNLNGENEMETTYIDMFCEGVRDLHVKYTRMIYMAYETEKDPYIKSILPGELAKFEKLLATRGNGRNLILGDKISYADYALFEELDVHQILDPHCLDKFPLLKAFHQRMKDRPKLKEYCEKRDAAKVPVNGNGKQ.

In terms of domain architecture, GST N-terminal spans 1–78 (MSYKLTYFSI…HLARKYNLNG (78 aa)). Glutathione contacts are provided by residues Tyr-7, Lys-42, 49–50 (QL), and 62–63 (QS). The region spanning 80–200 (NEMETTYIDM…YCEKRDAAKV (121 aa)) is the GST C-terminal domain.

The protein belongs to the GST superfamily. Pi family. In terms of assembly, homodimer. In terms of tissue distribution, hypodermis, wall of the seminal receptacle and spermatozoa of adult worms.

The enzyme catalyses RX + glutathione = an S-substituted glutathione + a halide anion + H(+). In terms of biological role, appears to play a central role in the parasite detoxification system. This Onchocerca volvulus protein is Glutathione S-transferase 2 (GST2).